We begin with the raw amino-acid sequence, 325 residues long: Beta-ketoacyl-[acyl-carrier-protein] synthase III (325 aa).

Residues C119 and H252 contribute to the active site. Positions 253–257 are ACP-binding; it reads QANIR. Residue N282 is part of the active site.

Belongs to the thiolase-like superfamily. FabH family. As to quaternary structure, homodimer.

It localises to the cytoplasm. The catalysed reaction is malonyl-[ACP] + acetyl-CoA + H(+) = 3-oxobutanoyl-[ACP] + CO2 + CoA. The protein operates within lipid metabolism; fatty acid biosynthesis. Functionally, catalyzes the condensation reaction of fatty acid synthesis by the addition to an acyl acceptor of two carbons from malonyl-ACP. Catalyzes the first condensation reaction which initiates fatty acid synthesis and may therefore play a role in governing the total rate of fatty acid production. Possesses both acetoacetyl-ACP synthase and acetyl transacylase activities. Its substrate specificity determines the biosynthesis of branched-chain and/or straight-chain of fatty acids. This chain is Beta-ketoacyl-[acyl-carrier-protein] synthase III, found in Acidovorax ebreus (strain TPSY) (Diaphorobacter sp. (strain TPSY)).